The following is a 699-amino-acid chain: Cell pattern formation-associated protein StuA (699 aa).

2 disordered regions span residues 1-20 (MDGT…LLAP) and 31-97 (TPQF…QPEH). Low complexity predominate over residues 32-49 (PQFKSQQSQPQSQSQYPS). Polar residues predominate over residues 52-61 (NPDSYSSSSP). Positions 75-84 (EDGEDYDQEE) are enriched in acidic residues. Residues 226 to 332 (RVTATLWEDE…HNIGALLYHP (107 aa)) enclose the HTH APSES-type domain. The H-T-H motif DNA-binding region spans 260–281 (GTKLLNVAGMTRGRRDGILKSE). Disordered stretches follow at residues 372–594 (AMPT…MNSM), 599–618 (RRDD…DLNN), and 674–699 (PSYP…QSFG). Polar residues predominate over residues 376-423 (GYTSQQPLTNGHQSMANTPQPLTNGSQPPMNGSQTPMNGPQPPMQNGG). Composition is skewed to basic and acidic residues over residues 428–438 (RVREDDDDLHR) and 478–491 (GLKR…DMHR). The span at 520–529 (NLHQPLSNGD) shows a compositional bias: polar residues. The span at 535 to 545 (RGRDDDDDVHR) shows a compositional bias: basic and acidic residues. A compositionally biased stretch (polar residues) spans 566 to 594 (TSTSNDMLPQSPYYTLSNGAYQGPMMNSM). The segment at 669–695 (TVAVSPSYPAGPGYELARPVTNVPRRQ) is nuclear localization domain.

It belongs to the EFG1/PHD1/stuA family.

It localises to the nucleus. Its function is as follows. Transcription factor that regulates asexual reproduction. Binds the StuA-response elements (StRE) with the consensus sequence 5'-(A/T)CGCG(T/A)N(A/C)-3' at the promoters of target genes. Controls the expression of the gene clusters involved in the production of deoxynivalenol (DON) and 15-acetyldeoxynivalenol (15ADON). Regulates the expression of genes involved in chitin and glucan metabolism. Also controls catalase activity and cell surface hydrophobicity. Plays an important role in pathogenicity. The protein is Cell pattern formation-associated protein StuA of Gibberella zeae (strain ATCC MYA-4620 / CBS 123657 / FGSC 9075 / NRRL 31084 / PH-1) (Wheat head blight fungus).